The primary structure comprises 189 residues: Small ribosomal subunit protein uS5 (189 aa).

The 64-residue stretch at 22-85 (FVDKLVAINR…EAAKRDLIFV (64 aa)) folds into the S5 DRBM domain.

Belongs to the universal ribosomal protein uS5 family. Part of the 30S ribosomal subunit. Contacts proteins S4 and S8.

Its function is as follows. With S4 and S12 plays an important role in translational accuracy. Functionally, located at the back of the 30S subunit body where it stabilizes the conformation of the head with respect to the body. This is Small ribosomal subunit protein uS5 from Sinorhizobium fredii (strain NBRC 101917 / NGR234).